The following is a 501-amino-acid chain: MSTANNKPAESVSLNAFKQPRAFYLIFSIELWERFGYYGLQGIMAVYLVKQLGMSEADSITLFSSFSALVYGLVAIGGWLGDKVLGTKRVIMLGAIVLAIGYALVAWSGHDAAIVYMGMATIAVGNGLFKANPSSLLSTCYDKNDPRLDGAFTMYYMSINIGSFFSMLATPWLAARFGWSVAFALSVVGMVITIINFAFCQKWVKQYGSKPDFAPVHMGKLLATIAGVVVLVAIATWLLHNQGIARMVLGVVALGIVVIFAKETIGLKGAARRKMIVAFLLMVEAIVFFVLYSQMPTSLNFFAIRNVEHSILGIAFEPEQYQALNPFWIMIGSPILAAIYNKMGDRLPMPHKFAIGMVLCSGAFLVLPLGAKFASDAGIVSVNWLILSYALQSIGELMISGLGLAMVAQLVPQRLMGFIMGSWFLTTAGAAIIAGKIANLMAVPENVTDPLVSLEVYGHVFLQIGIVTAVIAALMLLTAPKLNRMTQDDSADLKARETAAA.

Residues 1-21 are Cytoplasmic-facing; it reads MSTANNKPAESVSLNAFKQPR. A helical membrane pass occupies residues 22–44; the sequence is AFYLIFSIELWERFGYYGLQGIM. Residues 45–59 lie on the Periplasmic side of the membrane; it reads AVYLVKQLGMSEADS. A helical membrane pass occupies residues 60 to 80; the sequence is ITLFSSFSALVYGLVAIGGWL. Residues 81-89 lie on the Cytoplasmic side of the membrane; sequence GDKVLGTKR. The chain crosses the membrane as a helical span at residues 90–110; it reads VIMLGAIVLAIGYALVAWSGH. Asp-111 is a topological domain (periplasmic). A helical transmembrane segment spans residues 112 to 132; sequence AAIVYMGMATIAVGNGLFKAN. Over 133–153 the chain is Cytoplasmic; that stretch reads PSSLLSTCYDKNDPRLDGAFT. The helical transmembrane segment at 154–174 threads the bilayer; the sequence is MYYMSINIGSFFSMLATPWLA. The Periplasmic portion of the chain corresponds to 175 to 178; sequence ARFG. A helical transmembrane segment spans residues 179 to 199; it reads WSVAFALSVVGMVITIINFAF. The Cytoplasmic portion of the chain corresponds to 200 to 218; the sequence is CQKWVKQYGSKPDFAPVHM. A helical transmembrane segment spans residues 219 to 239; it reads GKLLATIAGVVVLVAIATWLL. At 240 to 246 the chain is on the periplasmic side; it reads HNQGIAR. A helical membrane pass occupies residues 247–267; it reads MVLGVVALGIVVIFAKETIGL. The Cytoplasmic segment spans residues 268-274; it reads KGAARRK. Residues 275 to 295 traverse the membrane as a helical segment; the sequence is MIVAFLLMVEAIVFFVLYSQM. At 296 to 320 the chain is on the periplasmic side; the sequence is PTSLNFFAIRNVEHSILGIAFEPEQ. The chain crosses the membrane as a helical span at residues 321–341; sequence YQALNPFWIMIGSPILAAIYN. Topologically, residues 342-352 are cytoplasmic; it reads KMGDRLPMPHK. Residues 353-373 traverse the membrane as a helical segment; it reads FAIGMVLCSGAFLVLPLGAKF. The Periplasmic segment spans residues 374–383; the sequence is ASDAGIVSVN. The helical transmembrane segment at 384 to 404 threads the bilayer; that stretch reads WLILSYALQSIGELMISGLGL. At 405 to 414 the chain is on the cytoplasmic side; that stretch reads AMVAQLVPQR. The chain crosses the membrane as a helical span at residues 415–435; the sequence is LMGFIMGSWFLTTAGAAIIAG. At 436-459 the chain is on the periplasmic side; the sequence is KIANLMAVPENVTDPLVSLEVYGH. Residues 460-480 form a helical membrane-spanning segment; it reads VFLQIGIVTAVIAALMLLTAP. Over 481–501 the chain is Cytoplasmic; the sequence is KLNRMTQDDSADLKARETAAA.

This sequence belongs to the major facilitator superfamily. Proton-dependent oligopeptide transporter (POT/PTR) (TC 2.A.17) family. DtpA subfamily.

It localises to the cell inner membrane. Functionally, proton-dependent permease that transports di- and tripeptides. In Klebsiella pneumoniae (strain 342), this protein is Dipeptide and tripeptide permease A.